A 243-amino-acid chain; its full sequence is Pleckstrin homology domain-containing family B member 1 (243 aa).

The PH domain occupies 21-128 (ALVRGGWLWR…WKTALMEANS (108 aa)).

As to quaternary structure, binds transducins. Homodimer. Interacts (via PH domain) with MYO1C. Interacts (via PH domain) with MYO7A. As to expression, highly expressed in retina and brain. In retina, abundantly expressed in photoreceptors. Isoform 4 is the predominant isoform expressed in mature olfactory receptor neurons and vestibular and cochlear hair cells. Also expressed in cells with possible sensory function, including peripheral retinal ganglion cells, cochlear interdental cells, and neurons of the circumventricular organ (at protein level).

Its subcellular location is the membrane. It is found in the cytoplasm. In Mus musculus (Mouse), this protein is Pleckstrin homology domain-containing family B member 1 (Plekhb1).